Here is a 282-residue protein sequence, read N- to C-terminus: DNA processing protein DprA (282 aa).

This sequence belongs to the DprA/Smf family. Homodimer; forms tail-to-tail dimers, forms nucleoprotein complex (NPC) which requires at least 30 nucleotides (nt) of ssDNA becoming optimal with 50 nt. Interacts with RecA, forms mixed DprA-RecA-ssDNA filaments. Interacts with ComFA and ComFC.

It localises to the cytoplasm. Its function is as follows. Protein that helps load RecA onto ssDNA during transformation. Required for DNA transformation. Not required for DNA uptake but for a later stage of transformation. Thought to interact at the cell pole with newly imported transforming ssDNA which it binds cooperatively, protecting linear and circular ssDNA from nuclease action. Forms bridges between DNA segments. Favors the loading of RecA onto ssDNA and formation of RecA-DNA filaments, triggering RecA-catalysis of ATP-driven homologous DNA pairing. In Streptococcus pneumoniae (strain ATCC BAA-255 / R6), this protein is DNA processing protein DprA.